The chain runs to 374 residues: tRNA-specific 2-thiouridylase MnmA (374 aa).

ATP is bound by residues 17-24 (GMSGGVDS) and methionine 43. The tract at residues 103-105 (NPD) is interaction with target base in tRNA. The active-site Nucleophile is cysteine 108. Cysteine 108 and cysteine 204 are joined by a disulfide. Glycine 132 is an ATP binding site. The interaction with tRNA stretch occupies residues 154-156 (KDQ). Cysteine 204 acts as the Cysteine persulfide intermediate in catalysis. The interval 316–317 (RY) is interaction with tRNA.

Belongs to the MnmA/TRMU family.

Its subcellular location is the cytoplasm. It catalyses the reaction S-sulfanyl-L-cysteinyl-[protein] + uridine(34) in tRNA + AH2 + ATP = 2-thiouridine(34) in tRNA + L-cysteinyl-[protein] + A + AMP + diphosphate + H(+). In terms of biological role, catalyzes the 2-thiolation of uridine at the wobble position (U34) of tRNA, leading to the formation of s(2)U34. This Pseudomonas putida (strain GB-1) protein is tRNA-specific 2-thiouridylase MnmA.